We begin with the raw amino-acid sequence, 435 residues long: Hexane cyclase xenF (435 aa).

An N-terminal signal peptide occupies residues 1 to 23; the sequence is MSPAANMFRTLTLTALVSAVVSA. Residues N81 and N156 are each glycosylated (N-linked (GlcNAc...) asparagine).

It belongs to the Diels-Alderase family.

It participates in mycotoxin biosynthesis. Hexane cyclase; part of the gene cluster that mediates the biosynthesis of xenoacremones such as xenoacremone A, a compound that shows inhibitory activity toward the PI3K/AKT signaling pathway and which has the ability to induce apoptosis of A549 lung cancer cells. Within the pathway, cooperation of the hybrid PKS-NRPS xenE and the trans-acting enoyl reductase xenG is responsible for the formation of the reduced tyrosine-nonaketide derivative. The alpha/beta hydrolase xenA then accelerates intramolecular nucleophilic attack to give a pyrrolidone derivative. Subsequently, three enzymes, xenF, xenD, and xenC, coordinately participate in the conversion to xenoacremone B. XenF catalyzes sigmatropic rearrangement to form an A-ring, which leads to an unusual intermediate with a hexane ring, which is required for the formation of the tricarbocyclic product. Epoxidation catalyzed by xenD and the formation of the paracyclophane ether catalyzed by xenC initiate a spontaneous intramolecular Diels-Alder (IMDA) reaction to yield xenoacremone B. Spontaneous hydration of xenoacremone B leads to the formation of xenoacremone A, which undergoes subsequent methylation to afford xenoacremone C. The sequence is that of Hexane cyclase xenF from Xenoacremonium sinensis (Endophyte fungus).